Reading from the N-terminus, the 492-residue chain is Pre-mRNA-splicing factor sap61 (492 aa).

The C2H2-type zinc-finger motif lies at 243 to 267; the sequence is FYCEVCQKFFGKITVFEAHKKSKAH. Disordered stretches follow at residues 268-291 and 337-365; these read NKAV…KQKG and AAER…QDDE. The span at 276–286 shows a compositional bias: low complexity; the sequence is SSSPSTTSNTN. Polar residues predominate over residues 345–354; sequence QSTPSVSVEG. The segment covering 355 to 365 has biased composition (acidic residues); it reads NQDEESDQDDE. A Phosphoserine modification is found at Ser360. Residues 397–428 form a Matrin-type zinc finger; it reads FPCEICGNYVYMGRKAFDKHFTEQRHIYGLKC.

The protein belongs to the SF3A3 family. As to quaternary structure, belongs to the 40S cdc5-associated complex (or cwf complex), a spliceosome sub-complex reminiscent of a late-stage spliceosome composed of the U2, U5 and U6 snRNAs and at least brr2, cdc5, cwf2/prp3, cwf3/syf1, cwf4/syf3, cwf5/ecm2, spp42/cwf6, cwf7/spf27, cwf8, cwf9, cwf10, cwf11, cwf12, prp45/cwf13, cwf14, cwf15, cwf16, cwf17, cwf18, cwf19, cwf20, cwf21, cwf22, cwf23, cwf24, cwf25, cwf26, cyp7/cwf27, cwf28, cwf29/ist3, lea1, msl1, prp5/cwf1, prp10, prp12/sap130, prp17, prp22, sap61, sap62, sap114, sap145, slu7, smb1, smd1, smd3, smf1, smg1 and syf2.

It is found in the nucleus. Its subcellular location is the cytoplasm. Functionally, involved in mRNA splicing where it associates with cdc5 and the other cwf proteins as part of the spliceosome. The protein is Pre-mRNA-splicing factor sap61 (sap61) of Schizosaccharomyces pombe (strain 972 / ATCC 24843) (Fission yeast).